Here is a 633-residue protein sequence, read N- to C-terminus: Phosphomethylpyrimidine synthase (633 aa).

Residues Asn245, Met274, Tyr303, His339, 359 to 361, 400 to 403, and Glu439 each bind substrate; these read SRG and DGLR. Zn(2+) is bound at residue His443. Position 466 (Tyr466) interacts with substrate. Zn(2+) is bound at residue His507. Residues Cys587, Cys590, and Cys595 each contribute to the [4Fe-4S] cluster site.

This sequence belongs to the ThiC family. As to quaternary structure, homodimer. Requires [4Fe-4S] cluster as cofactor.

It carries out the reaction 5-amino-1-(5-phospho-beta-D-ribosyl)imidazole + S-adenosyl-L-methionine = 4-amino-2-methyl-5-(phosphooxymethyl)pyrimidine + CO + 5'-deoxyadenosine + formate + L-methionine + 3 H(+). It participates in cofactor biosynthesis; thiamine diphosphate biosynthesis. In terms of biological role, catalyzes the synthesis of the hydroxymethylpyrimidine phosphate (HMP-P) moiety of thiamine from aminoimidazole ribotide (AIR) in a radical S-adenosyl-L-methionine (SAM)-dependent reaction. This is Phosphomethylpyrimidine synthase from Neisseria meningitidis serogroup C / serotype 2a (strain ATCC 700532 / DSM 15464 / FAM18).